A 431-amino-acid chain; its full sequence is Glutamyl-tRNA(Gln) amidotransferase subunit A (431 aa).

Residues Lys-55 and Ser-130 each act as charge relay system in the active site. The active-site Acyl-ester intermediate is Ser-154.

Belongs to the amidase family. GatA subfamily. In terms of assembly, heterotrimer of A, B and C subunits.

It catalyses the reaction L-glutamyl-tRNA(Gln) + L-glutamine + ATP + H2O = L-glutaminyl-tRNA(Gln) + L-glutamate + ADP + phosphate + H(+). Functionally, allows the formation of correctly charged Gln-tRNA(Gln) through the transamidation of misacylated Glu-tRNA(Gln) in organisms which lack glutaminyl-tRNA synthetase. The reaction takes place in the presence of glutamine and ATP through an activated gamma-phospho-Glu-tRNA(Gln). The chain is Glutamyl-tRNA(Gln) amidotransferase subunit A from Methanococcus maripaludis (strain C7 / ATCC BAA-1331).